The primary structure comprises 290 residues: Acetyl-coenzyme A carboxylase carboxyl transferase subunit beta (290 aa).

Residues 30-290 (IMTKCPKCKK…HAGQEVNKDA (261 aa)) form the CoA carboxyltransferase N-terminal domain. Residues Cys-34, Cys-37, Cys-53, and Cys-56 each coordinate Zn(2+). A C4-type zinc finger spans residues 34–56 (CPKCKKIMYTKELSENLNVCFNC).

Belongs to the AccD/PCCB family. As to quaternary structure, acetyl-CoA carboxylase is a heterohexamer composed of biotin carboxyl carrier protein (AccB), biotin carboxylase (AccC) and two subunits each of ACCase subunit alpha (AccA) and ACCase subunit beta (AccD). It depends on Zn(2+) as a cofactor.

Its subcellular location is the cytoplasm. The enzyme catalyses N(6)-carboxybiotinyl-L-lysyl-[protein] + acetyl-CoA = N(6)-biotinyl-L-lysyl-[protein] + malonyl-CoA. The protein operates within lipid metabolism; malonyl-CoA biosynthesis; malonyl-CoA from acetyl-CoA: step 1/1. Functionally, component of the acetyl coenzyme A carboxylase (ACC) complex. Biotin carboxylase (BC) catalyzes the carboxylation of biotin on its carrier protein (BCCP) and then the CO(2) group is transferred by the transcarboxylase to acetyl-CoA to form malonyl-CoA. This is Acetyl-coenzyme A carboxylase carboxyl transferase subunit beta from Staphylococcus carnosus (strain TM300).